A 206-amino-acid chain; its full sequence is Translation initiation factor IF-3 (206 aa).

The protein belongs to the IF-3 family. In terms of assembly, monomer.

The protein resides in the cytoplasm. IF-3 binds to the 30S ribosomal subunit and shifts the equilibrium between 70S ribosomes and their 50S and 30S subunits in favor of the free subunits, thus enhancing the availability of 30S subunits on which protein synthesis initiation begins. This is Translation initiation factor IF-3 from Chlorobium luteolum (strain DSM 273 / BCRC 81028 / 2530) (Pelodictyon luteolum).